The chain runs to 253 residues: Pro-opiomelanocortin A (253 aa).

A signal peptide spans 1 to 21 (MLCPAWLLAVAVVGVVRGVKG). Position 22 is a pyrrolidone carboxylic acid (Q22). Disulfide bonds link C23–C45 and C29–C41. An N-acetylserine; in Corticotropin modification is found at S104. V116 bears the Valine amide mark. The disordered stretch occupies residues 228 to 253 (QKREQWGREEGEEKRALGERKYHFQG). The residue at position 252 (Q252) is a Glutamine amide; partial.

Belongs to the POMC family. In terms of processing, specific enzymatic cleavages at paired basic residues yield the different active peptides. Post-translationally, acetylation of beta-endorphin occurs in a tissue-specific manner. C-terminal peptide 1 and C-terminal peptide 2 are detected in the anterior part of the nucleus lateralis tuberis of hypothalamus, in dorsal hypothalamus, thalamus, telencephalon, optic tectum and medulla oblongata (at protein level). Expressed in pituitary and hypothalamus of adult diploid animals, and hypothalamus of triploid and ovulated female trout.

It localises to the secreted. Stimulates the adrenal glands to release cortisol. Functionally, melanocyte-stimulating hormone alpha: Anorexigenic peptide. Increases the pigmentation of skin by increasing melanin production in melanocytes. Its function is as follows. Melanocyte-stimulating hormone beta: Increases the pigmentation of skin by increasing melanin production in melanocytes. In terms of biological role, beta-endorphin: Endogenous orexigenic opiate. Endogenous opiate. This Oncorhynchus mykiss (Rainbow trout) protein is Pro-opiomelanocortin A (pomca).